The following is a 563-amino-acid chain: Delta-1-pyrroline-5-carboxylate dehydrogenase, mitochondrial (563 aa).

The N-terminal 24 residues, 1-24 (MLLRSAALCRALLARRGRAAGLCR), are a transit peptide targeting the mitochondrion. Position 44 is a phosphoserine (Ser-44). An N6-acetyllysine modification is found at Lys-52. 5 positions are modified to N6-acetyllysine; alternate: Lys-93, Lys-99, Lys-114, Lys-130, and Lys-175. An N6-succinyllysine; alternate mark is found at Lys-93, Lys-99, Lys-114, Lys-130, and Lys-175. NAD(+) contacts are provided by residues Ser-208, Lys-233, and 286-290 (GSVPT). The active-site Proton acceptor is Glu-314. Lys-318 is modified (N6-acetyllysine). Lys-347 is subject to N6-succinyllysine. The active-site Nucleophile is the Cys-348. An N6-acetyllysine mark is found at Lys-365 and Lys-376. The residue at position 395 (Lys-395) is an N6-succinyllysine. An NAD(+)-binding site is contributed by Glu-447. An N6-acetyllysine; alternate modification is found at Lys-509. Lys-509 carries the post-translational modification N6-succinyllysine; alternate. Ser-513 serves as a coordination point for substrate. Lys-531 carries the N6-acetyllysine modification.

This sequence belongs to the aldehyde dehydrogenase family. Homodimer.

The protein resides in the mitochondrion matrix. It catalyses the reaction L-glutamate 5-semialdehyde + NAD(+) + H2O = L-glutamate + NADH + 2 H(+). It participates in amino-acid degradation; L-proline degradation into L-glutamate; L-glutamate from L-proline: step 2/2. In terms of biological role, irreversible conversion of delta-1-pyrroline-5-carboxylate (P5C), derived either from proline or ornithine, to glutamate. This is a necessary step in the pathway interconnecting the urea and tricarboxylic acid cycles. The preferred substrate is glutamic gamma-semialdehyde, other substrates include succinic, glutaric and adipic semialdehydes. The protein is Delta-1-pyrroline-5-carboxylate dehydrogenase, mitochondrial (ALDH4A1) of Bos taurus (Bovine).